Reading from the N-terminus, the 147-residue chain is Protein OPG060 (147 aa).

The protein belongs to the orthopoxvirus OPG058 family.

This chain is Protein OPG060 (OPG060), found in Bos taurus (Bovine).